A 1243-amino-acid chain; its full sequence is Plasma membrane calcium-transporting ATPase 2 (1243 aa).

Polar residues predominate over residues 1-13 (MGDMTNSDFYSKN). Residues 1-24 (MGDMTNSDFYSKNQRNESSHGGEF) are disordered. At 1-94 (MGDMTNSDFY…NFIPPKKPKT (94 aa)) the chain is on the cytoplasmic side. Serine 18 is modified (phosphoserine). A helical membrane pass occupies residues 95-115 (FLQLVWEALQDVTLIILEIAA). The Extracellular portion of the chain corresponds to 116–152 (IISLGLSFYHPPGEGNEGCATAQGGAEDEGEAEAGWI). Residues 153-173 (EGAAILLSVICVVLVTAFNDW) traverse the membrane as a helical segment. At 174–390 (SKEKQFRGLQ…KEKSVLQGKL (217 aa)) the chain is on the cytoplasmic side. A disordered region spans residues 334 to 381 (GKMQDGNVDASQSKAKQQDGAAAMEMQPLKSAEGGDADDRKKASMHKK). A helical membrane pass occupies residues 391–410 (TKLAVQIGKAGLVMSAITVI). The Extracellular segment spans residues 411–443 (ILVLYFTVDTFVVNKKPWLPECTPVYVQYFVKF). A helical transmembrane segment spans residues 444–461 (FIIGVTVLVVAVPEGLPL). Topologically, residues 462 to 875 (AVTISLAYSV…MWGRNVYDSI (414 aa)) are cytoplasmic. Catalysis depends on aspartate 499, which acts as the 4-aspartylphosphate intermediate. Aspartate 820 and aspartate 824 together coordinate Mg(2+). The helical transmembrane segment at 876 to 895 (SKFLQFQLTVNVVAVIVAFT) threads the bilayer. Residues 896 to 905 (GACITQDSPL) are Extracellular-facing. Residues 906 to 926 (KAVQMLWVNLIMDTFASLALA) traverse the membrane as a helical segment. Residues 927–946 (TEPPTETLLLRKPYGRNKPL) are Cytoplasmic-facing. The chain crosses the membrane as a helical span at residues 947-969 (ISRTMMKNILGHAVYQLALIFTL). The Extracellular segment spans residues 970–987 (LFVGEKMFQIDSGRNAPL). The helical transmembrane segment at 988–1009 (HSPPSEHYTIIFNTFVMMQLFN) threads the bilayer. Over 1010–1028 (EINARKIHGERNVFDGIFR) the chain is Cytoplasmic. A helical membrane pass occupies residues 1029–1050 (NPIFCTIVLGTFAIQIVIVQFG). At 1051–1060 (GKPFSCSPLQ) the chain is on the extracellular side. Residues 1061-1082 (LDQWMWCIFIGLGELVWGQVIA) traverse the membrane as a helical segment. At 1083–1243 (TIPTSRLKFL…SPIHSLETSL (161 aa)) the chain is on the cytoplasmic side. 3 positions are modified to phosphoserine: glutamate 1120, arginine 1132, and leucine 1134. Residues 1123–1140 (LRRGQILWFRGLNRIQTQ) form a calmodulin-binding subdomain A region. At threonine 1139 the chain carries Phosphothreonine; by PKC. The segment at 1141–1150 (IRVVKAFRSS) is calmodulin-binding subdomain B. Alanine 1146, leucine 1151, serine 1163, histidine 1165, aspartate 1177, and serine 1178 each carry phosphoserine. Residue threonine 1188 is modified to Phosphothreonine. The tract at residues 1194 to 1243 (AALKQNSSPPSSLNKNNSAIDSGINLTTDTSKSATSSSPGSPIHSLETSL) is disordered. 2 stretches are compositionally biased toward low complexity: residues 1196–1211 (LKQNSSPPSSLNKNNS) and 1220–1234 (TTDTSKSATSSSPGS). Position 1201 is a phosphoserine; by PKA (serine 1201). Serine 1211 is subject to Phosphoserine.

This sequence belongs to the cation transport ATPase (P-type) (TC 3.A.3) family. Type IIB subfamily. Interacts with PDZD11. Mainly expressed in brain cortex. Found in low levels in skeletal muscle, heart muscle, stomach, liver, kidney and lung. Isoforms containing segment B are found in brain cortex and at low levels in other tissues. Isoforms containing segments X and W are found at low levels in all tissues. Isoforms containing segment A and segment Z are found at low levels in skeletal muscle and heart muscle.

It is found in the cell membrane. It localises to the synapse. The protein resides in the apical cell membrane. The protein localises to the basolateral cell membrane. The enzyme catalyses Ca(2+)(in) + ATP + H2O = Ca(2+)(out) + ADP + phosphate + H(+). With respect to regulation, up-regulated by calmodulin which increases the affinity of the pump for Ca(2+) ions. Functionally, ATP-driven Ca(2+) ion pump involved in the maintenance of basal intracellular Ca(2+) levels in specialized cells of cerebellar circuit and vestibular and cochlear systems. Uses ATP as an energy source to transport cytosolic Ca(2+) ions across the plasma membrane to the extracellular compartment. Has fast activation and Ca(2+) clearance rate suited to control fast neuronal Ca(2+) dynamics. At parallel fiber to Purkinje neuron synapse, mediates presynaptic Ca(2+) efflux in response to climbing fiber-induced Ca(2+) rise. Provides for fast return of Ca(2+) concentrations back to their resting levels, ultimately contributing to long-term depression induction and motor learning. Plays an essential role in hearing and balance. In cochlear hair cells, shuttles Ca(2+) ions from stereocilia to the endolymph and dissipates Ca(2+) transients generated by the opening of the mechanoelectrical transduction channels. Regulates Ca(2+) levels in the vestibular system, where it contributes to the formation of otoconia. In non-excitable cells, regulates Ca(2+) signaling through spatial control of Ca(2+) ions extrusion and dissipation of Ca(2+) transients generated by store-operated channels. In lactating mammary gland, allows for the high content of Ca(2+) ions in the milk. The polypeptide is Plasma membrane calcium-transporting ATPase 2 (Homo sapiens (Human)).